The chain runs to 61 residues: Small ribosomal subunit protein uS14 (61 aa).

Cys24, Cys27, Cys40, and Cys43 together coordinate Zn(2+).

It belongs to the universal ribosomal protein uS14 family. Zinc-binding uS14 subfamily. As to quaternary structure, part of the 30S ribosomal subunit. Contacts proteins S3 and S10. Zn(2+) is required as a cofactor.

Functionally, binds 16S rRNA, required for the assembly of 30S particles and may also be responsible for determining the conformation of the 16S rRNA at the A site. In Streptococcus mutans serotype c (strain ATCC 700610 / UA159), this protein is Small ribosomal subunit protein uS14.